Here is a 323-residue protein sequence, read N- to C-terminus: Transaldolase (323 aa).

The active-site Schiff-base intermediate with substrate is lysine 133.

The protein belongs to the transaldolase family. Type 1 subfamily. In terms of assembly, monomer.

It carries out the reaction D-sedoheptulose 7-phosphate + D-glyceraldehyde 3-phosphate = D-erythrose 4-phosphate + beta-D-fructose 6-phosphate. Its pathway is carbohydrate degradation; pentose phosphate pathway; D-glyceraldehyde 3-phosphate and beta-D-fructose 6-phosphate from D-ribose 5-phosphate and D-xylulose 5-phosphate (non-oxidative stage): step 2/3. Functionally, transaldolase important for the balance of metabolites in the pentose-phosphate pathway. Involved in xylose fermentation to ethanol. This Fusarium oxysporum f. sp. lycopersici (strain 4287 / CBS 123668 / FGSC 9935 / NRRL 34936) (Fusarium vascular wilt of tomato) protein is Transaldolase.